Consider the following 185-residue polypeptide: Shikimate kinase (185 aa).

15 to 20 (GAGKST) contacts ATP. S19 is a Mg(2+) binding site. Substrate is bound by residues D37, R61, and G83. R121 serves as a coordination point for ATP. Residue R146 participates in substrate binding.

The protein belongs to the shikimate kinase family. In terms of assembly, monomer. Mg(2+) is required as a cofactor.

The protein resides in the cytoplasm. It carries out the reaction shikimate + ATP = 3-phosphoshikimate + ADP + H(+). Its pathway is metabolic intermediate biosynthesis; chorismate biosynthesis; chorismate from D-erythrose 4-phosphate and phosphoenolpyruvate: step 5/7. Catalyzes the specific phosphorylation of the 3-hydroxyl group of shikimic acid using ATP as a cosubstrate. In Blochmanniella floridana, this protein is Shikimate kinase.